Here is a 106-residue protein sequence, read N- to C-terminus: Small ribosomal subunit protein uS10 (106 aa).

It belongs to the universal ribosomal protein uS10 family. In terms of assembly, part of the 30S ribosomal subunit.

Involved in the binding of tRNA to the ribosomes. The protein is Small ribosomal subunit protein uS10 of Prochlorococcus marinus (strain MIT 9303).